The following is a 1411-amino-acid chain: DNA-directed RNA polymerase subunit beta' (1411 aa).

Residues cysteine 70, cysteine 72, cysteine 85, and cysteine 88 each coordinate Zn(2+). Mg(2+) contacts are provided by aspartate 458, aspartate 460, and aspartate 462. Cysteine 813, cysteine 887, cysteine 894, and cysteine 897 together coordinate Zn(2+). The segment at 1384–1411 (AEAAEMATTGSDEAPEVEGSGVESGSAE) is disordered.

It belongs to the RNA polymerase beta' chain family. In terms of assembly, the RNAP catalytic core consists of 2 alpha, 1 beta, 1 beta' and 1 omega subunit. When a sigma factor is associated with the core the holoenzyme is formed, which can initiate transcription. It depends on Mg(2+) as a cofactor. Zn(2+) serves as cofactor.

It catalyses the reaction RNA(n) + a ribonucleoside 5'-triphosphate = RNA(n+1) + diphosphate. Functionally, DNA-dependent RNA polymerase catalyzes the transcription of DNA into RNA using the four ribonucleoside triphosphates as substrates. In Paracidovorax citrulli (strain AAC00-1) (Acidovorax citrulli), this protein is DNA-directed RNA polymerase subunit beta'.